Here is a 591-residue protein sequence, read N- to C-terminus: MLILNGFSSATLALITPPFLPKGGKALSQSGPDGLASITLPLPISAERGFAPALALHYSSGGGNGPFGVGWSCATMSIARRTSHGVPQYNDSDEFLGPDGEVLVQTLSTGDAPNPVTCFAYGDVSFPQSYTVTRYQPRTESSFYRLEYWVGNSNGDDFWLLHDSNGILHLLGKTAAARLSDPQAASHTAQWLVEESVTPAGEHIYYSYLAENGDNVDLNGNEAGRDRSAMRYLSKVQYGNATPAADLYLWTSATPAVQWLFTLVFDYGERGVDPQVPPAFTAQNSWLARQDPFSLYNYGFEIRLHRLCRQVLMFHHFPDELGEADTLVSRLLLEYDENPILTQLCAARTLAYEGDGYRRAPVNNMMPPPPPPPMMGGNSSRPKSKWAIVEESKQIQALRYYSAQGYSVINKYLRGDDYPETQAKETLLSRDYLSTNEPSDEEFKNAMSVYINDIAEGLSSLPETDHRVVYRGLKLDKPALSDVLKEYTTIGNIIIDKAFMSTSPDKAWINDTILNIYLEKGHKGRILGDVAHFKGEAEMLFPPNTKLKIESIVNCGSQDFASQLSKLRLSDDATADTNRIKRIINMRVLNS.

The 204-residue stretch at 373–576 folds into the TR mART core domain; that stretch reads PMMGGNSSRP…LRLSDDATAD (204 aa). Active-site residues include arginine 471, serine 501, and glutamate 538.

The protein belongs to the SpvB family.

The protein localises to the secreted. It catalyses the reaction L-arginyl-[protein] + NAD(+) = N(omega)-(ADP-D-ribosyl)-L-arginyl-[protein] + nicotinamide + H(+). Its function is as follows. Mono-ADP-ribosylates eukaryotic muscle and non-muscle actin on 'Arg-177'. ADP-ribosylation prevents the polymerization of G-actin to F-actin, causing actin filament depolymerization, destruction of the cytoskeleton and cytotoxicity. Does not possess NAD(+)-glycohydrolase activity, unlike most mART enzymes. The polypeptide is Mono(ADP-ribosyl)transferase SpvB (spvB) (Salmonella typhimurium (strain 14028s / SGSC 2262)).